The sequence spans 218 residues: Peptide methionine sulfoxide reductase MsrA (218 aa).

Cys-57 is an active-site residue.

The protein belongs to the MsrA Met sulfoxide reductase family.

It carries out the reaction L-methionyl-[protein] + [thioredoxin]-disulfide + H2O = L-methionyl-(S)-S-oxide-[protein] + [thioredoxin]-dithiol. It catalyses the reaction [thioredoxin]-disulfide + L-methionine + H2O = L-methionine (S)-S-oxide + [thioredoxin]-dithiol. In terms of biological role, has an important function as a repair enzyme for proteins that have been inactivated by oxidation. Catalyzes the reversible oxidation-reduction of methionine sulfoxide in proteins to methionine. The chain is Peptide methionine sulfoxide reductase MsrA from Brucella abortus (strain S19).